We begin with the raw amino-acid sequence, 302 residues long: RNA polymerase II holoenzyme cyclin-like subunit (302 aa).

Positions 53–142 (QQLIKLGKRM…LGECEFSLIS (90 aa)) constitute a Cyclin N-terminal domain.

This sequence belongs to the cyclin family. Cyclin C subfamily. In terms of assembly, component of the srb8-11 complex, a regulatory module of the Mediator complex.

The protein localises to the nucleus. Component of the srb8-11 complex. The srb8-11 complex is a regulatory module of the Mediator complex which is itself involved in regulation of basal and activated RNA polymerase II-dependent transcription. The srb8-11 complex may be involved in the transcriptional repression of a subset of genes regulated by Mediator. It may inhibit the association of the Mediator complex with RNA polymerase II to form the holoenzyme complex. The srb8-11 complex phosphorylates the C-terminal domain (CTD) of the largest subunit of RNA polymerase II. This Aspergillus clavatus (strain ATCC 1007 / CBS 513.65 / DSM 816 / NCTC 3887 / NRRL 1 / QM 1276 / 107) protein is RNA polymerase II holoenzyme cyclin-like subunit (ssn8).